Reading from the N-terminus, the 330-residue chain is DNA-directed RNA polymerase subunit alpha (330 aa).

The interval 1 to 232 (MAILAFQKPD…YHFMLFSDEK (232 aa)) is alpha N-terminal domain (alpha-NTD). The segment at 248–330 (EEVLHMRQLL…DISKYKLDKE (83 aa)) is alpha C-terminal domain (alpha-CTD).

It belongs to the RNA polymerase alpha chain family. Homodimer. The RNAP catalytic core consists of 2 alpha, 1 beta, 1 beta' and 1 omega subunit. When a sigma factor is associated with the core the holoenzyme is formed, which can initiate transcription.

The enzyme catalyses RNA(n) + a ribonucleoside 5'-triphosphate = RNA(n+1) + diphosphate. Its function is as follows. DNA-dependent RNA polymerase catalyzes the transcription of DNA into RNA using the four ribonucleoside triphosphates as substrates. This Bacteroides fragilis (strain ATCC 25285 / DSM 2151 / CCUG 4856 / JCM 11019 / LMG 10263 / NCTC 9343 / Onslow / VPI 2553 / EN-2) protein is DNA-directed RNA polymerase subunit alpha.